The primary structure comprises 227 residues: Cytochrome c oxidase subunit 2 (227 aa).

The Mitochondrial intermembrane portion of the chain corresponds to 1 to 14; that stretch reads MAYPMQLGFQDATS. The helical transmembrane segment at 15 to 45 threads the bilayer; sequence PIMEELLHFHDHTLMIVFLISSLVLYIISLM. At 46-59 the chain is on the mitochondrial matrix side; that stretch reads LTTKLTHTSTMDAQ. The chain crosses the membrane as a helical span at residues 60 to 87; sequence EVETIWTILPAIILIMIALPSLRILYMM. At 88-227 the chain is on the mitochondrial intermembrane side; sequence DEINNPSLTV…YFEKWSASML (140 aa). Cys196, Glu198, Cys200, His204, and Met207 together coordinate Cu cation. Glu198 lines the Mg(2+) pocket. A Phosphotyrosine modification is found at Tyr218.

This sequence belongs to the cytochrome c oxidase subunit 2 family. Component of the cytochrome c oxidase (complex IV, CIV), a multisubunit enzyme composed of 14 subunits. The complex is composed of a catalytic core of 3 subunits MT-CO1, MT-CO2 and MT-CO3, encoded in the mitochondrial DNA, and 11 supernumerary subunits COX4I, COX5A, COX5B, COX6A, COX6B, COX6C, COX7A, COX7B, COX7C, COX8 and NDUFA4, which are encoded in the nuclear genome. The complex exists as a monomer or a dimer and forms supercomplexes (SCs) in the inner mitochondrial membrane with NADH-ubiquinone oxidoreductase (complex I, CI) and ubiquinol-cytochrome c oxidoreductase (cytochrome b-c1 complex, complex III, CIII), resulting in different assemblies (supercomplex SCI(1)III(2)IV(1) and megacomplex MCI(2)III(2)IV(2)). Found in a complex with TMEM177, COA6, COX18, COX20, SCO1 and SCO2. Interacts with TMEM177 in a COX20-dependent manner. Interacts with COX20. Interacts with COX16. Cu cation is required as a cofactor.

It localises to the mitochondrion inner membrane. It carries out the reaction 4 Fe(II)-[cytochrome c] + O2 + 8 H(+)(in) = 4 Fe(III)-[cytochrome c] + 2 H2O + 4 H(+)(out). Its function is as follows. Component of the cytochrome c oxidase, the last enzyme in the mitochondrial electron transport chain which drives oxidative phosphorylation. The respiratory chain contains 3 multisubunit complexes succinate dehydrogenase (complex II, CII), ubiquinol-cytochrome c oxidoreductase (cytochrome b-c1 complex, complex III, CIII) and cytochrome c oxidase (complex IV, CIV), that cooperate to transfer electrons derived from NADH and succinate to molecular oxygen, creating an electrochemical gradient over the inner membrane that drives transmembrane transport and the ATP synthase. Cytochrome c oxidase is the component of the respiratory chain that catalyzes the reduction of oxygen to water. Electrons originating from reduced cytochrome c in the intermembrane space (IMS) are transferred via the dinuclear copper A center (CU(A)) of subunit 2 and heme A of subunit 1 to the active site in subunit 1, a binuclear center (BNC) formed by heme A3 and copper B (CU(B)). The BNC reduces molecular oxygen to 2 water molecules using 4 electrons from cytochrome c in the IMS and 4 protons from the mitochondrial matrix. The sequence is that of Cytochrome c oxidase subunit 2 (MT-CO2) from Ovis aries (Sheep).